Here is a 436-residue protein sequence, read N- to C-terminus: GTPase Der (436 aa).

EngA-type G domains follow at residues 4-167 (SVVA…PNES) and 176-351 (IYFS…ESHT). GTP contacts are provided by residues 10-17 (GRPNVGKS), 57-61 (DTGGI), 119-122 (NKMD), 182-189 (GRPNVGKS), 229-233 (DTAGM), and 294-297 (NKWD). Residues 352–436 (KRIPTNVLND…PIKLFARRRQ (85 aa)) form the KH-like domain.

This sequence belongs to the TRAFAC class TrmE-Era-EngA-EngB-Septin-like GTPase superfamily. EngA (Der) GTPase family. Associates with the 50S ribosomal subunit.

Functionally, GTPase that plays an essential role in the late steps of ribosome biogenesis. The chain is GTPase Der from Oceanobacillus iheyensis (strain DSM 14371 / CIP 107618 / JCM 11309 / KCTC 3954 / HTE831).